Here is a 128-residue protein sequence, read N- to C-terminus: MADEATRAAFMEIQASMIELTGKLKQVQNQMRNKEGDRKRAFLTLEELRPLPEETNTYKSIGRTFVLEPKTVLEGEQEQKLKDSEAAVASLQTSKEYLEKQVAEVENNLRELLQQEPGIAQQIMSMSM.

Coiled coils occupy residues 17 to 37 and 81 to 115; these read MIEL…KEGD and LKDS…LLQQ.

Belongs to the prefoldin subunit beta family. As to quaternary structure, heterohexamer of two PFD-alpha type and four PFD-beta type subunits forming prefoldin co-chaperone complex. Interacts with LSM8, a specific subunit of the LSM2-8 complex, which is a core component of the spliceosome.

Its subcellular location is the cytoplasm. The protein resides in the nucleus. Functionally, binds specifically to cytosolic chaperonin (c-CPN) and transfers target proteins to it. Binds to nascent polypeptide chain and promotes folding in an environment in which there are many competing pathways for nonnative proteins. Together with other chaperonins, contribute to the regulation of gene expression by modulating the spliceosome function on pre-mRNA splicing post-transcriptionally by acting as a co-chaperone of Hsp90 to control levels of LSM8. Required for microtubules (MTs) organization and dynamicity. Involved in the process leading to microtubules dissociation in response to gibberellic acid (GA) probably due to the DELLA proteins-mediated translocation of the prefoldin co-chaperone complex from the cytoplasm to the nucleus. This chain is Prefoldin subunit 1, found in Arabidopsis thaliana (Mouse-ear cress).